A 65-amino-acid polypeptide reads, in one-letter code: MNKAWLFWSVIVLYFFIKFFDKVLDIKLFGSIQIWLDNLPIPMKILLTIALVLFLFIVFPYRGKR.

A run of 2 helical transmembrane segments spans residues 4–24 (AWLFWSVIVLYFFIKFFDKVL) and 39–59 (LPIPMKILLTIALVLFLFIVF).

Its subcellular location is the membrane. This is an uncharacterized protein from Streptococcus pneumoniae serotype 2 (strain D39 / NCTC 7466).